Reading from the N-terminus, the 185-residue chain is C-type lectin domain family 5 member A (185 aa).

At 1–4 the chain is on the cytoplasmic side; sequence MNWH. Residues 5–27 traverse the membrane as a helical; Signal-anchor for type II membrane protein segment; it reads MIISGLIVVVLKIVGMTFFLLYF. Topologically, residues 28 to 185 are extracellular; the sequence is PQIFGEHNVS…YRSICEKSAQ (158 aa). N-linked (GlcNAc...) asparagine glycans are attached at residues Asn35 and Asn55. Cysteines 68 and 79 form a disulfide. The 107-residue stretch at 75–181 folds into the C-type lectin domain; sequence HQGRCFFLST…CDVNYRSICE (107 aa). 4 N-linked (GlcNAc...) asparagine glycosylation sites follow: Asn90, Asn117, Asn141, and Asn146. 2 disulfides stabilise this stretch: Cys96–Cys180 and Cys158–Cys172.

As to quaternary structure, monomer. Homodimer. The majority of CLEC5A is expressed as a monomeric form on macrophages. Interacts with TYROBP/DAP12. The interaction with TYROBP is required for CLEC5 cell surface expression. Interacts with HCST/DAP10. Forms a CLEC5A/TYROBP/HCST trimolecular complex depending almost solely on TYROBP. N-glycosylated. Contains sialic acid residues. Constitutively expressed in monocytes and macrophages.

The protein localises to the cell membrane. Functions as a positive regulator of osteoclastogenesis. Cell surface receptor that signals via TYROBP. Regulates inflammatory responses. The sequence is that of C-type lectin domain family 5 member A (CLEC5A) from Sus scrofa (Pig).